Here is a 433-residue protein sequence, read N- to C-terminus: Legumain (433 aa).

A signal peptide spans methionine 1–alanine 17. Positions valine 18–aspartate 25 are excised as a propeptide. N-linked (GlcNAc...) asparagine glycosylation is present at asparagine 91. Residue histidine 148 is part of the active site. Residue asparagine 167 is glycosylated (N-linked (GlcNAc...) asparagine). Catalysis depends on cysteine 189, which acts as the Nucleophile. N-linked (GlcNAc...) asparagine glycosylation is found at asparagine 263 and asparagine 272. The propeptide occupies aspartate 324–tyrosine 433. 2 cysteine pairs are disulfide-bonded: cysteine 378/cysteine 412 and cysteine 390/cysteine 429.

This sequence belongs to the peptidase C13 family. Homodimer before autocatalytic removal of the propeptide. Monomer after autocatalytic processing. May interact with integrins. In terms of processing, activated by autocatalytic processing at pH 4. As to expression, detected in kidney (at protein level).

The protein localises to the lysosome. It carries out the reaction Hydrolysis of proteins and small molecule substrates at -Asn-|-Xaa- bonds.. Its function is as follows. Has a strict specificity for hydrolysis of asparaginyl bonds. Can also cleave aspartyl bonds slowly, especially under acidic conditions. Involved in the processing of proteins for MHC class II antigen presentation in the lysosomal/endosomal system. Also involved in MHC class I antigen presentation in cross-presenting dendritic cells by mediating cleavage and maturation of Perforin-2 (MPEG1), thereby promoting antigen translocation in the cytosol. Required for normal lysosomal protein degradation in renal proximal tubules. Required for normal degradation of internalized EGFR. Plays a role in the regulation of cell proliferation via its role in EGFR degradation. This Bos taurus (Bovine) protein is Legumain (LGMN).